A 456-amino-acid polypeptide reads, in one-letter code: MEKLWGGRFQGKSEAWIDDFGASISFDQKMAKEDLAGSLAHVAMLSKCGIIPASEAAEITAGLKILQEKLALGELEFSTVNEDIHLNIEKLLHEEIGPVAGKLHTARSRNDQVATDMHLYLKQAVAEIIQSLKHLRVVLVQKAEANVETIMPGYTHLQHAQPISFAHHLLAYFGMFTRDLERLEESVKRIDISPLGSAALAGTTFPIDRAYSAELLGFSAVYENSLDGVSDRDFIIEFLSNSSILMMHLSRFCEELILWTSHEFQFVELTDAFSTGSSIMPQKKNPDMAELIRGKTGRVYGNLFGMLTVLKGLPLAYNKDLQEDKEGMFDTLETVQTCLDIFAGMIETMKINTEIMEESTQKDFSNATELADYLAKKGVPFREAHEIVGKLVLECTQNGIYLQDVALSHYQEINPLIDDDIYVVLSSKTAVQKRNSYGGTGFDQIKVALENAKKTL.

The protein belongs to the lyase 1 family. Argininosuccinate lyase subfamily.

The protein localises to the cytoplasm. It carries out the reaction 2-(N(omega)-L-arginino)succinate = fumarate + L-arginine. It participates in amino-acid biosynthesis; L-arginine biosynthesis; L-arginine from L-ornithine and carbamoyl phosphate: step 3/3. This chain is Argininosuccinate lyase, found in Listeria monocytogenes serotype 4b (strain F2365).